Here is a 315-residue protein sequence, read N- to C-terminus: Transcription antitermination protein NusB (315 aa).

The segment at serine 296–aspartate 315 is disordered. Residues lysine 302–aspartate 315 show a composition bias toward basic and acidic residues.

This sequence belongs to the NusB family.

Functionally, involved in transcription antitermination. Required for transcription of ribosomal RNA (rRNA) genes. Binds specifically to the boxA antiterminator sequence of the ribosomal RNA (rrn) operons. The polypeptide is Transcription antitermination protein NusB (Psychrobacter cryohalolentis (strain ATCC BAA-1226 / DSM 17306 / VKM B-2378 / K5)).